The following is a 132-amino-acid chain: Anti-sigma-E factor RseA (132 aa).

Threonine 36 is subject to Phosphothreonine; by PknB. 3 residues coordinate Zn(2+): histidine 63, cysteine 67, and cysteine 70. The interval arginine 106–arginine 132 is disordered.

It belongs to the zinc-associated anti-sigma factor (ZAS) superfamily. As to quaternary structure, interacts with ECF RNA polymerase sigma factor SigE, interaction is abrogated by treatment of cells with H(2)O(2), detergent or vancomycin (the latter 2 cause surface stress). This probably inhibits the interaction of SigE with the RNA polymerase catalytic core. Requires Zn(2+) as cofactor. In terms of processing, phosphorylated by PknB on Thr-36; can be dephosphorylated (at least in vitro) by PstP. Phosphorylation is the signal for subsequent degradation by the ClpC1-ClpP2 complex. Degraded following vancomycin treatment (surface stress) by a ClpC1-ClpP2 complex.

The protein resides in the cytoplasm. Functionally, an anti-sigma factor for extracytoplasmic function (ECF) sigma factor SigE. ECF sigma factors are held in an inactive form by an anti-sigma factor. This is Anti-sigma-E factor RseA (rseA) from Mycolicibacterium smegmatis (strain ATCC 700084 / mc(2)155) (Mycobacterium smegmatis).